A 177-amino-acid polypeptide reads, in one-letter code: Large ribosomal subunit protein uL6 (177 aa).

Belongs to the universal ribosomal protein uL6 family. Part of the 50S ribosomal subunit.

This protein binds to the 23S rRNA, and is important in its secondary structure. It is located near the subunit interface in the base of the L7/L12 stalk, and near the tRNA binding site of the peptidyltransferase center. The polypeptide is Large ribosomal subunit protein uL6 (Hydrogenovibrio crunogenus (strain DSM 25203 / XCL-2) (Thiomicrospira crunogena)).